Reading from the N-terminus, the 445-residue chain is Argininosuccinate synthase (445 aa).

ATP is bound by residues 17-25 (AFSGGLDTS) and alanine 43. Tyrosine 99 serves as a coordination point for L-citrulline. Residues glycine 129 and threonine 131 each contribute to the ATP site. Positions 131, 135, and 136 each coordinate L-aspartate. An L-citrulline-binding site is contributed by asparagine 135. Position 136 (aspartate 136) interacts with ATP. Arginine 139 and serine 192 together coordinate L-citrulline. Residue aspartate 194 coordinates ATP. Residues threonine 201, glutamate 203, and glutamate 280 each coordinate L-citrulline.

Belongs to the argininosuccinate synthase family. Type 2 subfamily. As to quaternary structure, homotetramer.

It is found in the cytoplasm. The enzyme catalyses L-citrulline + L-aspartate + ATP = 2-(N(omega)-L-arginino)succinate + AMP + diphosphate + H(+). It functions in the pathway amino-acid biosynthesis; L-arginine biosynthesis; L-arginine from L-ornithine and carbamoyl phosphate: step 2/3. The chain is Argininosuccinate synthase from Burkholderia cenocepacia (strain HI2424).